The primary structure comprises 390 residues: 5-hydroxytryptamine receptor 1B (390 aa).

The Extracellular segment spans residues 1 to 46 (MEEPGAQCAPPLAAGSQIAVPQANLSAAHSHNCSAEGYIYQDSIAL). N24 and N32 each carry an N-linked (GlcNAc...) asparagine glycan. The helical transmembrane segment at 47 to 72 (PWKVLLVLLLALFTLATTLSNAFVVA) threads the bilayer. The Cytoplasmic portion of the chain corresponds to 73–86 (TVYRTRKLHTPANY). A helical transmembrane segment spans residues 87 to 111 (LIASLAVTDLLVSILVMPISTMYTV). The Extracellular portion of the chain corresponds to 112–119 (TGRWTLGQ). The chain crosses the membrane as a helical span at residues 120–145 (VVCDLWLSSDITCCTASIMHLCVIAL). A disulfide bridge connects residues C122 and C199. 2 residues coordinate ergotamine: D129 and T134. The short motif at 146–148 (DRY) is the DRY motif; important for ligand-induced conformation changes and signaling element. At 146-165 (DRYWAITDAVEYSAKRTPKR) the chain is on the cytoplasmic side. The chain crosses the membrane as a helical span at residues 166-184 (AAIMIRLVWVFSICISLPP). The Extracellular portion of the chain corresponds to 185–205 (FFWRQAKAEEEVSECLVNTDH). Position 201 (V201) interacts with ergotamine. A helical membrane pass occupies residues 206–229 (VLYTVYSTVGAFYLPTLLLIALYG). Topologically, residues 230–315 (RIYVEARSRI…AARERKATKT (86 aa)) are cytoplasmic. A compositionally biased stretch (polar residues) spans 260–272 (SPGSTTSVTSINS). The disordered stretch occupies residues 260–282 (SPGSTTSVTSINSRAPDVPSESG). The helical transmembrane segment at 316 to 337 (LGIILGVFIVCWLPFFIISLVM) threads the bilayer. The Extracellular segment spans residues 338–347 (PICKDACWFH). Residues 348–370 (QAIFDFFTWLGYVNSLINPIIYT) traverse the membrane as a helical segment. The NPxxY motif; important for ligand-induced conformation changes and signaling signature appears at 365–369 (NPIIY). Residues 371–390 (MSNEDFKQAFHKLIRFKCTS) are Cytoplasmic-facing. C388 carries S-palmitoyl cysteine lipidation.

The protein belongs to the G-protein coupled receptor 1 family. Homodimer. Heterodimer with HTR1D. Phosphorylated. Desensitization of the receptor may be mediated by its phosphorylation. Post-translationally, palmitoylated.

Its subcellular location is the cell membrane. In terms of biological role, G-protein coupled receptor for 5-hydroxytryptamine (serotonin). Also functions as a receptor for ergot alkaloid derivatives, various anxiolytic and antidepressant drugs and other psychoactive substances, such as lysergic acid diethylamide (LSD). Ligand binding causes a conformation change that triggers signaling via guanine nucleotide-binding proteins (G proteins) and modulates the activity of downstream effectors, such as adenylate cyclase. HTR1B is coupled to G(i)/G(o) G alpha proteins and mediates inhibitory neurotransmission by inhibiting adenylate cyclase activity. Arrestin family members inhibit signaling via G proteins and mediate activation of alternative signaling pathways. Regulates the release of 5-hydroxytryptamine, dopamine and acetylcholine in the brain, and thereby affects neural activity, nociceptive processing, pain perception, mood and behavior. Besides, plays a role in vasoconstriction of cerebral arteries. This is 5-hydroxytryptamine receptor 1B (HTR1B) from Oryctolagus cuniculus (Rabbit).